Consider the following 125-residue polypeptide: Urotensin-2 (125 aa).

The first 20 residues, Met-1–Ser-20, serve as a signal peptide directing secretion. The propeptide occupies Leu-21–Tyr-111. Cys-119 and Cys-124 form a disulfide bridge.

This sequence belongs to the urotensin-2 family.

Its subcellular location is the secreted. Highly potent vasoconstrictor. The chain is Urotensin-2 (UTS2) from Macaca mulatta (Rhesus macaque).